The chain runs to 438 residues: Aflatoxin cluster transcriptional coactivator aflS (438 aa).

In terms of domain architecture, HTH iclR-type spans 65 to 134; sequence LALYNQLLAC…PSPGHVAHSV (70 aa). Residues 95 to 114 constitute a DNA-binding region (H-T-H motif); the sequence is FEDVADIAGVPECRLRRLVR.

Interacts with aflR.

Its subcellular location is the nucleus. Functionally, transcription factor; part of the gene cluster that mediates the biosynthesis of aflatoxin, a polyketide-derived furanocoumarin which is part of the most toxic and carcinogenic compounds among the known mycotoxins. AflS exhibits no DNA-binding capability on its own, but forms a complex with the other aflatoxin cluster transcription factor aflR and acts as a modulator of aflR's DNA-binding by decreasing its DNA-binding affinity. This is Aflatoxin cluster transcriptional coactivator aflS from Aspergillus flavus (strain ATCC 200026 / FGSC A1120 / IAM 13836 / NRRL 3357 / JCM 12722 / SRRC 167).